The primary structure comprises 783 residues: Tripartite motif-containing protein 67 (783 aa).

The segment at 7 to 42 adopts an RING-type; degenerate zinc-finger fold; it reads CPVCGSLFREPIILPCSHNVCLPCARTIAVQTPDGE. The B box-type 1; degenerate zinc-finger motif lies at 206-253; that stretch reads AICQLCDRTPPEPAATLCEQCDVLYCSACQLKCHPSRGPFAKHRLVQP. Positions 247–295 are disordered; that stretch reads KHRLVQPPPPPPPPAEAASGPTGTAQGAPSGGGGCKSPGGAGAGATGGS. The segment covering 252–261 has biased composition (pro residues); sequence QPPPPPPPPA. Gly residues predominate over residues 275–293; that stretch reads PSGGGGCKSPGGAGAGATG. The segment at 298–340 adopts a B box-type 2 zinc-finger fold; sequence RKFPTCPEHEMENYSMYCVSCRTPVCYLCLEEGRHAKHEVKPL. Zn(2+)-binding residues include Cys303, His306, Cys326, and His332. Residues 345–382 are a coiled coil; that stretch reads KQHKAQLSQALNGVSDKAKEAKEFLVQLKNILQQIQEN. In terms of domain architecture, COS spans 448 to 506; it reads IKENDPSGFLQISDALIKRVQVSQEQWVKGALEPKVSAEFDLTLDSEPLLQAIHQLDFI. The Fibronectin type-III domain occupies 513-607; the sequence is PPVPLLQLEK…KTVVLQTSDV (95 aa). One can recognise a B30.2/SPRY domain in the interval 589–780; the sequence is NSSGVGPYSK…VPTNLGRPKL (192 aa).

Belongs to the TRIM/RBCC family.

The protein localises to the cytoplasm. Its subcellular location is the cytoskeleton. The chain is Tripartite motif-containing protein 67 (TRIM67) from Homo sapiens (Human).